We begin with the raw amino-acid sequence, 70 residues long: Cecropin-P1 (70 aa).

Positions 1 to 13 are cleaved as a signal peptide; it reads MFLIYLFVQTAES. Residues 45–70 constitute a propeptide, removed in mature form; it reads RRRFVAEQDAIHSRVSREVPTLSDSV.

As to expression, expressed in the body wall, intestine, uterus and ovary.

It is found in the secreted. Functionally, has antibacterial activity against several Gram-positive and Gram-negative bacteria. Is weakly active against yeasts. Acts by a nonpore mechanism. This chain is Cecropin-P1 (ASCEC-1), found in Ascaris suum (Pig roundworm).